The sequence spans 3750 residues: Cubilin homolog (3750 aa).

Positions 1–28 (MEGAARSRLLLCWTLLAIITDTWPIAEG) are cleaved as a signal peptide. N-linked (GlcNAc...) asparagine glycans are attached at residues N51 and N123. The 37-residue stretch at 154–190 (EANSCASGPCENGGTCYNTYTGFRCQCRSAFEGTKCE) folds into the EGF-like 1 domain. 6 disulfides stabilise this stretch: C158/C169, C163/C178, C180/C189, C196/C212, C206/C221, and C223/C232. An EGF-like 2; calcium-binding domain is found at 192 to 233 (DVNECALYEGTDLGCQNGGQCQNHFGTYSCLCQPGWHGMHCT). Residues 282 to 308 (DVDECSDSAAHKPCSTSCINLPGSFTC) form the EGF-like 3; calcium-binding domain. Positions 324–352 (DLDECQTNNGGCSLSPKVDCINTYGSYHC) constitute an EGF-like 4; calcium-binding domain. N-linked (GlcNAc...) asparagine glycosylation is present at N424. EGF-like domains are found at residues 426 to 463 (TTTN…PICE) and 465 to 503 (QPSP…RLCE). 7 cysteine pairs are disulfide-bonded: C430–C441, C435–C451, C453–C462, C469–C480, C474–C491, C493–C502, and C509–C535. N448 carries N-linked (GlcNAc...) asparagine glycosylation. CUB domains are found at residues 509–623 (CNGM…WNSM), 627–738 (CGGR…YSVE), 744–852 (CGGV…YRMA), 853–971 (CDYK…YRAL), 978–1095 (CGGV…YTFE), 1100–1212 (CGGH…WRIF), 1216–1331 (CGGS…YKAN), 1332–1434 (CIRN…QLDY), 1439–1550 (CMEE…YRTV), 1554–1670 (CGGK…FHES), 1671–1788 (CGQT…YMTM), 1792–1902 (CGSI…YNYE), and 1903–2001 (HHNE…WNRL). N542 and N548 each carry an N-linked (GlcNAc...) asparagine glycan. C562 and C584 are oxidised to a cystine. N-linked (GlcNAc...) asparagine glycosylation occurs at N609. 6 disulfide bridges follow: C627/C654, C681/C701, C744/C770, C853/C879, C913/C933, and C978/C1004. An N-linked (GlcNAc...) asparagine glycan is attached at N871. Ca(2+) is bound by residues E1026, D1034, and D1080. A disulfide bridge connects residues C1031 and C1058. A disulfide bridge links C1100 with C1126. A glycan (N-linked (GlcNAc...) asparagine) is linked at N1119. E1148 contributes to the Ca(2+) binding site. A glycan (N-linked (GlcNAc...) asparagine) is linked at N1152. An intrachain disulfide couples C1153 to C1175. Positions 1156 and 1197 each coordinate Ca(2+). C1216 and C1242 form a disulfide bridge. 3 residues coordinate Ca(2+): E1264, D1272, and D1316. An intrachain disulfide couples C1269 to C1292. A disulfide bridge connects residues C1332 and C1360. N-linked (GlcNAc...) asparagine glycosylation is found at N1335, N1359, N1413, and N1424. Cysteines 1439 and 1465 form a disulfide. N1491 carries N-linked (GlcNAc...) asparagine glycosylation. 7 cysteine pairs are disulfide-bonded: C1492/C1513, C1554/C1580, C1607/C1631, C1671/C1697, C1733/C1755, C1792/C1818, and C1845/C1866. N-linked (GlcNAc...) asparagine glycosylation occurs at N1694. N-linked (GlcNAc...) asparagine glycosylation is found at N1908 and N2009. Disulfide bonds link C2019-C2048 and C2077-C2100. CUB domains follow at residues 2019-2139 (CGNQ…VRTA), 2140-2256 (CGSE…FRFE), 2262-2383 (DSGR…LSVA), 2385-2512 (CGGS…YTSL), and 2516-2646 (CGET…MNEV). 4 N-linked (GlcNAc...) asparagine glycosylation sites follow: N2092, N2128, N2152, and N2231. A disulfide bond links C2140 and C2167. The cysteines at positions 2324 and 2346 are disulfide-linked. N-linked (GlcNAc...) asparagine glycosylation is present at N2377. A disulfide bond links C2385 and C2416. N-linked (GlcNAc...) asparagine glycosylation occurs at N2442. Cystine bridges form between C2445-C2474 and C2516-C2542. N2655, N2671, N2682, and N2772 each carry an N-linked (GlcNAc...) asparagine glycan. Cystine bridges form between C2761–C2790 and C2837–C2859. 8 CUB domains span residues 2761–2895 (CGGV…IKYG), 2898–3010 (CGGK…FERN), 3011–3128 (CGGL…YTSR), 3130–3246 (CGGI…VRVM), 3249–3364 (CDEK…INAI), 3368–3512 (CGSS…VALN), 3522–3615 (LQGR…YLAS), and 3623–3736 (CGGQ…FAGV). N2885 and N2889 each carry an N-linked (GlcNAc...) asparagine glycan. 2 disulfide bridges follow: C2898–C2921 and C2949–C2973. 3 N-linked (GlcNAc...) asparagine glycosylation sites follow: N2960, N2965, and N2982. C3011 and C3039 are oxidised to a cystine. N3040 and N3074 each carry an N-linked (GlcNAc...) asparagine glycan. 2 disulfide bridges follow: C3070/C3092 and C3130/C3157. N3160 carries N-linked (GlcNAc...) asparagine glycosylation. 4 disulfides stabilise this stretch: C3184/C3207, C3249/C3278, C3305/C3327, and C3368/C3402. N3256 is a glycosylation site (N-linked (GlcNAc...) asparagine). Residue N3427 is glycosylated (N-linked (GlcNAc...) asparagine). Cysteines 3430 and 3475 form a disulfide. 3 N-linked (GlcNAc...) asparagine glycosylation sites follow: N3543, N3572, and N3645. 3 cysteine pairs are disulfide-bonded: C3560–C3579, C3623–C3649, and C3676–C3699.

As to expression, specifically expressed in nephrocytes.

The protein resides in the cell membrane. Functionally, required in the nephrocyte for normal uptake of proteins and elimination of toxins, and for maintenance of endocytic trafficking structures. May function together with Amnionless. The protein is Cubilin homolog of Drosophila melanogaster (Fruit fly).